A 139-amino-acid polypeptide reads, in one-letter code: Oocyte zinc finger protein XlCOF14 (139 aa).

5 C2H2-type zinc fingers span residues 6 to 28 (FICS…SNVH), 33 to 55 (FPCT…QKIH), 61 to 83 (HKCT…HLSH), 89 to 111 (FSCF…QLSH), and 117 to 139 (FVCS…CHIH).

Belongs to the krueppel C2H2-type zinc-finger protein family.

The protein resides in the nucleus. Functionally, may be involved in transcriptional regulation. The polypeptide is Oocyte zinc finger protein XlCOF14 (Xenopus laevis (African clawed frog)).